Here is a 361-residue protein sequence, read N- to C-terminus: MVWLVAMTSRQRSLCGLAAHGLWFLGLVLLMDATARPANHSFSRERAANRDENEIIPPDHLNGVKLEMDGHLNKDFHQEVFLGKDMDGFDEDSEPRRSRRKLMVIFSKVDVNTDRRISAKEMQHWIMEKTAEHFQEAVKENKLHFRAVDPDGDGHVSWDEYKVKFLASKGHNEREIADAIKNHEELKVDEETQEVLGNLRDRWYQADNPPADLLLTEDEFLSFLHPEHSRGMLKFMVKEIVRDLDQDGDKQLSLPEFISLPVGTVENQQGQDIDDNWVKDRKKEFEELIDSNHDGIVTMEELENYMDPMNEYNALNEAKQMIAIADENQNHHLEPEEILKYSEFFTGSKLMDYARNVHEEF.

The first 35 residues, 1 to 35 (MVWLVAMTSRQRSLCGLAAHGLWFLGLVLLMDATA), serve as a signal peptide directing secretion. An N-linked (GlcNAc...) asparagine glycan is attached at Asn-39. EF-hand domains are found at residues 97–132 (RSRR…KTAE) and 136–171 (EAVK…SKGH). At Ser-98 the chain carries Phosphoserine. Positions 110, 112, 114, 116, 121, 149, 151, 153, 155, and 160 each coordinate Ca(2+). Phosphothreonine is present on Thr-192. 4 EF-hand domains span residues 196-231 (LGNL…HSRG), 232-267 (MLKF…TVEN), 277-312 (WVKD…MNEY), and 313-348 (NALN…FTGS). Asp-212 contributes to the Ca(2+) binding site. Thr-216 carries the phosphothreonine modification. The Ca(2+) site is built by Glu-219, Asp-245, Asp-247, Asp-249, Gln-251, and Glu-256. Thr-264 is modified (phosphothreonine). The Ca(2+) site is built by Asp-290, Asn-292, and Asp-294. Thr-298 carries the post-translational modification Phosphothreonine. Positions 301, 326, 328, 330, 332, and 337 each coordinate Ca(2+). The segment at 308–361 (PMNEYNALNEAKQMIAIADENQNHHLEPEEILKYSEFFTGSKLMDYARNVHEEF) is necessary for intracellular retention in Golgi apparatus lumen.

The protein belongs to the CREC family. In terms of assembly, a membrane-associated isoform interacts with STX3 and STXBP1. In terms of tissue distribution, a membrane-associated isoform is expressed in acini of the pancreas (at protein level). Ubiquitous.

The protein resides in the golgi apparatus lumen. Its function is as follows. A membrane-associated isoform may be involved in the exocytosis of zymogens by pancreatic acini. May regulate calcium-dependent activities in the endoplasmic reticulum lumen or post-ER compartment. The chain is 45 kDa calcium-binding protein (Sdf4) from Rattus norvegicus (Rat).